A 99-amino-acid polypeptide reads, in one-letter code: Small ribosomal subunit protein uS19 (99 aa).

Residues 77-99 (TRTFHGHSGDKKAKVAKGGPGGR) are disordered.

Belongs to the universal ribosomal protein uS19 family.

Functionally, protein S19 forms a complex with S13 that binds strongly to the 16S ribosomal RNA. The chain is Small ribosomal subunit protein uS19 from Sorangium cellulosum (strain So ce56) (Polyangium cellulosum (strain So ce56)).